The primary structure comprises 115 residues: Large ribosomal subunit protein uL23 (115 aa).

This sequence belongs to the universal ribosomal protein uL23 family. In terms of assembly, part of the 50S ribosomal subunit. Contacts protein L29, and trigger factor when it is bound to the ribosome.

Its function is as follows. One of the early assembly proteins it binds 23S rRNA. One of the proteins that surrounds the polypeptide exit tunnel on the outside of the ribosome. Forms the main docking site for trigger factor binding to the ribosome. This is Large ribosomal subunit protein uL23 from Granulibacter bethesdensis (strain ATCC BAA-1260 / CGDNIH1).